The primary structure comprises 233 residues: Tetrahydromethanopterin S-methyltransferase subunit D (233 aa).

Helical transmembrane passes span L4 to V24, V39 to A59, L67 to V87, F133 to A153, M166 to I186, and G209 to Y229.

The protein belongs to the MtrD family. As to quaternary structure, the complex is composed of 8 subunits; MtrA, MtrB, MtrC, MtrD, MtrE, MtrF, MtrG and MtrH.

It is found in the cell membrane. The catalysed reaction is 5-methyl-5,6,7,8-tetrahydromethanopterin + coenzyme M + 2 Na(+)(in) = 5,6,7,8-tetrahydromethanopterin + methyl-coenzyme M + 2 Na(+)(out). It functions in the pathway one-carbon metabolism; methanogenesis from CO(2); methyl-coenzyme M from 5,10-methylene-5,6,7,8-tetrahydromethanopterin: step 2/2. Functionally, part of a complex that catalyzes the formation of methyl-coenzyme M and tetrahydromethanopterin from coenzyme M and methyl-tetrahydromethanopterin. This is an energy-conserving, sodium-ion translocating step. The protein is Tetrahydromethanopterin S-methyltransferase subunit D of Methanothermobacter marburgensis (strain ATCC BAA-927 / DSM 2133 / JCM 14651 / NBRC 100331 / OCM 82 / Marburg) (Methanobacterium thermoautotrophicum).